A 147-amino-acid polypeptide reads, in one-letter code: Peroxynitrite isomerase (147 aa).

His137 lines the heme b pocket.

Belongs to the nitrobindin family. As to quaternary structure, homodimer. The cofactor is heme b.

It carries out the reaction peroxynitrite = nitrate. The protein operates within nitrogen metabolism. Functionally, heme-binding protein able to scavenge peroxynitrite and to protect free L-tyrosine against peroxynitrite-mediated nitration, by acting as a peroxynitrite isomerase that converts peroxynitrite to nitrate. Therefore, this protein likely plays a role in peroxynitrite sensing and in the detoxification of reactive nitrogen and oxygen species (RNS and ROS, respectively). Is able to bind nitric oxide (NO) in vitro, but may act as a sensor of peroxynitrite levels in vivo. This is Peroxynitrite isomerase from Frankia alni (strain DSM 45986 / CECT 9034 / ACN14a).